We begin with the raw amino-acid sequence, 459 residues long: Elongation factor 1-alpha 2 (459 aa).

The tr-type G domain occupies 5 to 242; the sequence is KTHINIVVIG…DCIIPPQRPT (238 aa). Residues 14–21 are G1; sequence GHVDSGKS. The segment at 70–74 is G2; the sequence is GITID. A G3 region spans residues 91 to 94; that stretch reads DAPG. A G4 region spans residues 153-156; sequence NKMD. The G5 stretch occupies residues 194–196; sequence SGF. 5-glutamyl glycerylphosphorylethanolamine occurs at positions 301 and 374.

The protein belongs to the TRAFAC class translation factor GTPase superfamily. Classic translation factor GTPase family. EF-Tu/EF-1A subfamily.

The protein localises to the cytoplasm. Functionally, this protein promotes the GTP-dependent binding of aminoacyl-tRNA to the A-site of ribosomes during protein biosynthesis. In Oscheius tipulae, this protein is Elongation factor 1-alpha 2 (eft-2).